Consider the following 518-residue polypeptide: Golgi-associated olfactory signaling regulator (518 aa).

Positions 1 to 19 (MKSFSRILFLVFLLAGLRS) are cleaved as a signal peptide. Residues 20 to 409 (KAAPSAPLPL…GRPRGAAGGA (390 aa)) are Extracellular-facing. The segment at 38–377 (HPSETSPLKG…ATLRAPQRHS (340 aa)) is disordered. Residues 92 to 106 (DLRETPHPESPETPK) are compositionally biased toward basic and acidic residues. N124 is a glycosylation site (N-linked (GlcNAc...) asparagine). Pro residues predominate over residues 138–153 (TPGPTEMPHPGSPETP). N156 is a glycosylation site (N-linked (GlcNAc...) asparagine). 2 stretches are compositionally biased toward polar residues: residues 168-180 (TPNTDLMQTTPQE) and 187-207 (LNATEVSQAELPETSNTNPTK). N188 and N220 each carry an N-linked (GlcNAc...) asparagine glycan. Basic and acidic residues-rich tracts occupy residues 209–220 (PDPKSPEKHDLN) and 236–247 (DPSKTPHPESHV). Polar residues-rich tracts occupy residues 248–270 (THNPSPTEISQTEFPTTYYQNAT) and 276–285 (SDPQISTSLY). N268 carries N-linked (GlcNAc...) asparagine glycosylation. A helical membrane pass occupies residues 410–430 (LCLFFAGTALLIGIFVLLWCL). At 431–518 (YRRAARQRPF…SPATLPNNFV (88 aa)) the chain is on the cytoplasmic side. The disordered stretch occupies residues 477-518 (HIATKQPPPTPPLPPKLPPPPRGGRPQRLEALSPATLPNNFV). Residues 482-499 (QPPPTPPLPPKLPPPPRG) are compositionally biased toward pro residues.

It localises to the golgi apparatus membrane. Its function is as follows. Required for proper function of the olfactory system. May be involved in establishing the acuity of olfactory sensory signaling. The sequence is that of Golgi-associated olfactory signaling regulator (GFY) from Homo sapiens (Human).